The sequence spans 89 residues: Small ribosomal subunit protein bS20 (89 aa).

The tract at residues 1 to 26 (MANSAQARKRARQADGQRSHNASLRS) is disordered.

This sequence belongs to the bacterial ribosomal protein bS20 family.

In terms of biological role, binds directly to 16S ribosomal RNA. The protein is Small ribosomal subunit protein bS20 of Dechloromonas aromatica (strain RCB).